A 458-amino-acid chain; its full sequence is UPF0210 protein MmarC5_0151 (458 aa).

It belongs to the UPF0210 family.

The chain is UPF0210 protein MmarC5_0151 from Methanococcus maripaludis (strain C5 / ATCC BAA-1333).